The sequence spans 553 residues: Hydroxylamine reductase (553 aa).

Residues cysteine 3, cysteine 6, cysteine 18, and cysteine 25 each contribute to the [2Fe-2S] cluster site. Residues histidine 252, glutamate 276, cysteine 320, cysteine 408, cysteine 436, cysteine 461, glutamate 495, and lysine 497 each coordinate hybrid [4Fe-2O-2S] cluster. Cysteine 408 is subject to Cysteine persulfide.

The protein belongs to the HCP family. The cofactor is [2Fe-2S] cluster. Hybrid [4Fe-2O-2S] cluster is required as a cofactor.

It localises to the cytoplasm. It carries out the reaction A + NH4(+) + H2O = hydroxylamine + AH2 + H(+). Its function is as follows. Catalyzes the reduction of hydroxylamine to form NH(3) and H(2)O. In Vibrio vulnificus (strain YJ016), this protein is Hydroxylamine reductase.